We begin with the raw amino-acid sequence, 930 residues long: Wings apart-like protein 1 (930 aa).

The segment at 540-566 (FSPTSMSGSQSSVSGNEPTTSKTRVGS) is disordered. Over residues 541–553 (SPTSMSGSQSSVS) the composition is skewed to low complexity. The span at 554–566 (GNEPTTSKTRVGS) shows a compositional bias: polar residues. Positions 854–909 (KEAEKMIVEAYSALLLAFLSTESRSIRNSIKDYLPKRNLAILVPVLERFVAFHMTL) constitute a WAPL domain.

This sequence belongs to the WAPL family. As to quaternary structure, interacts with the cohesin complex throughout the cell cycle. Expressed in roots, leaves, buds and siliques.

The protein resides in the nucleus. The protein localises to the chromosome. Its function is as follows. Regulator of sister chromatid cohesion in meiosis which negatively regulates cohesin association with chromatin, acting as an antagonist of CTF7. Cohesion ensures that chromosome partitioning is accurate in both meiotic and mitotic cells and plays an important role in DNA repair. Essential for the prophase removal of cohesin during meiosis thus determining the timely release of meiotic cohesion. Important for proper spindle attachment and assembly during meiosis. Helps to prevent abnormal centromere association during prophase I in meiocytes. Required for early embryonic patterning. Also involved in chromosome segregation during mitosis. The polypeptide is Wings apart-like protein 1 (Arabidopsis thaliana (Mouse-ear cress)).